A 223-amino-acid chain; its full sequence is uncharacterized protein (223 aa).

This is an uncharacterized protein from Treponema pallidum (strain Nichols).